We begin with the raw amino-acid sequence, 371 residues long: N-acetyldiaminopimelate deacetylase (371 aa).

D68 is an active-site residue. Catalysis depends on E127, which acts as the Proton acceptor.

It belongs to the peptidase M20A family. N-acetyldiaminopimelate deacetylase subfamily.

It carries out the reaction N-acetyl-(2S,6S)-2,6-diaminopimelate + H2O = (2S,6S)-2,6-diaminopimelate + acetate. The protein operates within amino-acid biosynthesis; L-lysine biosynthesis via DAP pathway; LL-2,6-diaminopimelate from (S)-tetrahydrodipicolinate (acetylase route): step 3/3. Functionally, catalyzes the conversion of N-acetyl-diaminopimelate to diaminopimelate and acetate. The chain is N-acetyldiaminopimelate deacetylase from Listeria monocytogenes serotype 4b (strain CLIP80459).